Here is a 968-residue protein sequence, read N- to C-terminus: Pumilio homolog 1 (968 aa).

2 disordered regions span residues 1 to 25 and 138 to 171; these read MIPE…DYEK and NNVL…TGAS. Position 194 is a phosphoserine (S194). Disordered stretches follow at residues 204–240, 260–303, and 360–382; these read GHGH…SQGI, GTPD…VTSG, and KSDQ…PHGS. Polar residues-rich tracts occupy residues 211-220 and 227-238; these read QQPSRPASRN and DSNNNLSPSASQ. T261 carries the post-translational modification Phosphothreonine. The segment covering 291–303 has biased composition (polar residues); that stretch reads TSNQSPFNGVTSG. Residues 610 to 950 enclose the PUM-HD domain; that stretch reads FGSSMLEEFK…HVVARIEKLV (341 aa). 8 Pumilio repeats span residues 630 to 665, 666 to 701, 702 to 737, 738 to 773, 774 to 810, 811 to 846, 847 to 882, and 883 to 924; these read EIAG…MVYE, EIMP…ELAE, KLFD…KMVK, ELDG…FIIS, TFFG…KVME, EILS…VIIK, ELAG…LLVN, and EMLG…LILT.

It is found in the cytoplasm. Its function is as follows. Sequence-specific RNA-binding protein that regulates translation and mRNA stability by binding the 3'-UTR of target mRNAs. Binds the APUM-binding elements (APBEs) in the 3'-UTR mRNA sequence of CLV1, PNH, WUS and FAS2. The polypeptide is Pumilio homolog 1 (APUM1) (Arabidopsis thaliana (Mouse-ear cress)).